We begin with the raw amino-acid sequence, 177 residues long: Large ribosomal subunit protein bL17 (177 aa).

The interval 136–177 is disordered; sequence AEEEAPAVEAEATEAVEAPVEETAAAEAEAPAEEAADAEKAE. Residues 138-149 are compositionally biased toward acidic residues; sequence EEAPAVEAEATE. Positions 150–164 are enriched in low complexity; it reads AVEAPVEETAAAEAE.

It belongs to the bacterial ribosomal protein bL17 family. Part of the 50S ribosomal subunit. Contacts protein L32.

This is Large ribosomal subunit protein bL17 from Bifidobacterium longum (strain NCC 2705).